The chain runs to 93 residues: Alpha-defensin 24 (93 aa).

The N-terminal stretch at 1–19 (MKTLILLSALVLLAFQVQA) is a signal peptide. A propeptide spanning residues 20-58 (DPIQNTDEETKTEEQPGEEDQAVSVSFGDPEGASLQEES) is cleaved from the precursor. Positions 23-54 (QNTDEETKTEEQPGEEDQAVSVSFGDPEGASL) are disordered. Cystine bridges form between cysteine 64-cysteine 92, cysteine 66-cysteine 81, and cysteine 71-cysteine 91.

It belongs to the alpha-defensin family.

The protein localises to the secreted. Its function is as follows. May have microbicidal activities. This chain is Alpha-defensin 24 (Defa24), found in Mus musculus (Mouse).